Reading from the N-terminus, the 257-residue chain is Small ribosomal subunit protein uS4c (257 aa).

S4 RNA-binding domains are found at residues 110–170 (MRLD…QLVN) and 189–255 (KTLP…KNYL).

This sequence belongs to the universal ribosomal protein uS4 family. Part of the 30S ribosomal subunit. Contacts protein S5. The interaction surface between S4 and S5 is involved in control of translational fidelity.

The protein localises to the plastid. It is found in the chloroplast. In terms of biological role, one of the primary rRNA binding proteins, it binds directly to 16S rRNA where it nucleates assembly of the body of the 30S subunit. Functionally, with S5 and S12 plays an important role in translational accuracy. The sequence is that of Small ribosomal subunit protein uS4c (rps4) from Chlamydomonas reinhardtii (Chlamydomonas smithii).